The chain runs to 259 residues: Small ribosomal subunit protein uS2 (259 aa).

The protein belongs to the universal ribosomal protein uS2 family.

The protein is Small ribosomal subunit protein uS2 of Streptococcus pneumoniae (strain CGSP14).